We begin with the raw amino-acid sequence, 452 residues long: cAMP/cGMP-dependent 3',5'-cAMP/cGMP phosphodiesterase A (452 aa).

The first 23 residues, 1-23 (MALNKKLISLLLLIFIILNIVNS), serve as a signal peptide directing secretion. Residues 24-49 (HQQEDCDDDDEDIGISAERSERRSVK) constitute a propeptide that is removed on maturation. Asparagine 101, asparagine 141, and asparagine 277 each carry an N-linked (GlcNAc...) asparagine glycan.

Belongs to the cyclic nucleotide phosphodiesterase class-II family.

The protein localises to the secreted. Its subcellular location is the extracellular space. The protein resides in the cell surface. It carries out the reaction 3',5'-cyclic AMP + H2O = AMP + H(+). The enzyme catalyses 3',5'-cyclic GMP + H2O = GMP + H(+). Its activity is regulated as follows. Inhibited by dithiotreitol (DTT). Phosphodiesterase which displays a preference for cAMP over cGMP. Involved in the degradation of extracellular cAMP. Maintains the responsiveness of cells to the chemoattractant cAMP during the aggregation phase of development. The chain is cAMP/cGMP-dependent 3',5'-cAMP/cGMP phosphodiesterase A (pdsA) from Dictyostelium discoideum (Social amoeba).